The following is a 790-amino-acid chain: Pentatricopeptide repeat-containing protein At1g25360 (790 aa).

16 PPR repeats span residues 48–82 (RAHI…DKIA), 84–109 (TTMV…APVC), 112–146 (DTVM…GFKP), 147–182 (DNFT…GAGY), 183–217 (ITSV…ILEK), 218–248 (DERS…MDDN), 250–284 (KLVA…GIEL), 285–315 (DEFT…VLRR), 319–349 (SFHF…MPAK), 350–384 (DLVS…NILS), 385–415 (WMIM…GFEP), 416–450 (CDYA…GFDS), 451–481 (SLSA…MPCL), 482–516 (DSVS…GIRP), 517–551 (DRIT…YRIP), and 553–583 (GADH…LPFK). A type E motif region spans residues 588–663 (IWEALLSGCR…EVACSWIEME (76 aa)). The segment at 664–694 (TQVHTFLVDDTSHPEAEAVYIYLQDLGKEMR) is type E(+) motif. Residues 695-790 (RLGYVPDTSF…NGECSCGNFW (96 aa)) are type DYW motif.

The protein belongs to the PPR family. PCMP-H subfamily.

This chain is Pentatricopeptide repeat-containing protein At1g25360 (PCMP-H74), found in Arabidopsis thaliana (Mouse-ear cress).